A 565-amino-acid chain; its full sequence is UvrABC system protein C (565 aa).

Residues 12–89 (EEPGVYIFKN…IRTHKPKYNV (78 aa)) enclose the GIY-YIG domain. The UVR domain occupies 195–230 (KDVLPTLYEKIEQYASNLAFEKAAFLRDQVLVLQNI).

The protein belongs to the UvrC family. In terms of assembly, interacts with UvrB in an incision complex.

The protein localises to the cytoplasm. Functionally, the UvrABC repair system catalyzes the recognition and processing of DNA lesions. UvrC both incises the 5' and 3' sides of the lesion. The N-terminal half is responsible for the 3' incision and the C-terminal half is responsible for the 5' incision. The protein is UvrABC system protein C of Hydrogenobaculum sp. (strain Y04AAS1).